The chain runs to 241 residues: Eukaryotic translation initiation factor 3 subunit J (241 aa).

The tract at residues 1–97 (MEEDWEQLSE…EEEDMTPEQK (97 aa)) is disordered. The segment covering 28–45 (GEDEEEEVKDSWEDEDEL) has biased composition (acidic residues). Residues 31 to 119 (EEEEVKDSWE…ESDLKNALDT (89 aa)) adopt a coiled-coil conformation. Basic and acidic residues-rich tracts occupy residues 46 to 58 (EEKK…ETPK) and 69 to 87 (IADK…RLEK).

This sequence belongs to the eIF-3 subunit J family. Component of the eukaryotic translation initiation factor 3 (eIF-3) complex.

The protein resides in the cytoplasm. Its function is as follows. Component of the eukaryotic translation initiation factor 3 (eIF-3) complex, which is involved in protein synthesis of a specialized repertoire of mRNAs and, together with other initiation factors, stimulates binding of mRNA and methionyl-tRNAi to the 40S ribosome. The eIF-3 complex specifically targets and initiates translation of a subset of mRNAs involved in cell proliferation. The polypeptide is Eukaryotic translation initiation factor 3 subunit J (Aedes aegypti (Yellowfever mosquito)).